The sequence spans 169 residues: Large ribosomal subunit protein uL10 (169 aa).

This sequence belongs to the universal ribosomal protein uL10 family. Part of the ribosomal stalk of the 50S ribosomal subunit. The N-terminus interacts with L11 and the large rRNA to form the base of the stalk. The C-terminus forms an elongated spine to which L12 dimers bind in a sequential fashion forming a multimeric L10(L12)X complex.

Its function is as follows. Forms part of the ribosomal stalk, playing a central role in the interaction of the ribosome with GTP-bound translation factors. The sequence is that of Large ribosomal subunit protein uL10 from Rickettsia felis (strain ATCC VR-1525 / URRWXCal2) (Rickettsia azadi).